Consider the following 626-residue polypeptide: ATP-dependent zinc metalloprotease FtsH (626 aa).

Over 1 to 7 (MNGNRPN) the chain is Cytoplasmic. Residues 8-28 (YISLIFAALVILSLFWLVRSF) form a helical membrane-spanning segment. At 29-108 (YFDTSAPSKM…VTGEKGVSSS (80 aa)) the chain is on the periplasmic side. The chain crosses the membrane as a helical span at residues 109–129 (FWVNVIGNVIFIGFLLFMFFF). Residues 130–626 (MMRTISGRNN…RAAAGSEQDS (497 aa)) lie on the Cytoplasmic side of the membrane. 202-209 (GPPGTGKT) serves as a coordination point for ATP. His-424 lines the Zn(2+) pocket. Glu-425 is a catalytic residue. Zn(2+)-binding residues include His-428 and Asp-501.

This sequence in the central section; belongs to the AAA ATPase family. In the C-terminal section; belongs to the peptidase M41 family. Homohexamer. Zn(2+) is required as a cofactor.

It localises to the cell inner membrane. Functionally, acts as a processive, ATP-dependent zinc metallopeptidase for both cytoplasmic and membrane proteins. Plays a role in the quality control of integral membrane proteins. The protein is ATP-dependent zinc metalloprotease FtsH of Pseudothermotoga lettingae (strain ATCC BAA-301 / DSM 14385 / NBRC 107922 / TMO) (Thermotoga lettingae).